The chain runs to 61 residues: Small ribosomal subunit protein bS21 (61 aa).

The protein belongs to the bacterial ribosomal protein bS21 family.

This chain is Small ribosomal subunit protein bS21, found in Leuconostoc mesenteroides subsp. mesenteroides (strain ATCC 8293 / DSM 20343 / BCRC 11652 / CCM 1803 / JCM 6124 / NCDO 523 / NBRC 100496 / NCIMB 8023 / NCTC 12954 / NRRL B-1118 / 37Y).